A 261-amino-acid polypeptide reads, in one-letter code: Cytochrome c oxidase subunit 3 (261 aa).

Topologically, residues 1–15 (MTHQTHAYHMVNPSP) are mitochondrial matrix. The helical transmembrane segment at 16–34 (WPLTGALSALLMTSGLIMW) threads the bilayer. At 35 to 40 (FHFNST) the chain is on the mitochondrial intermembrane side. A helical transmembrane segment spans residues 41–66 (ALLTLGLTTNMLTMYQWWRDVIREST). Over 67 to 72 (FQGHHT) the chain is Mitochondrial matrix. Residues 73–105 (PAVQKGLRYGMILFIISEVLFFTGFFWAFYHSS) form a helical membrane-spanning segment. Residues 106–128 (LAPTPELGGCWPPTGIHPLNPLE) lie on the Mitochondrial intermembrane side of the membrane. The helical transmembrane segment at 129–152 (VPLLNTSVLLASGVSITWAHHSLM) threads the bilayer. At 153 to 155 (EGN) the chain is on the mitochondrial matrix side. Residues 156-183 (RYHMLQALFITIALGVYFTLLQASEYYE) form a helical membrane-spanning segment. The Mitochondrial intermembrane portion of the chain corresponds to 184 to 190 (APFTISD). A helical membrane pass occupies residues 191-223 (GVYGSTFFVATGFHGLHVIIGSTFLIVCFFRQL). Residues 224-232 (KFHFTSSHH) are Mitochondrial matrix-facing. A helical transmembrane segment spans residues 233-256 (FGFEAAAWYWHFVDVVWLFLYMSI). Residues 257-261 (YWWGS) lie on the Mitochondrial intermembrane side of the membrane.

It belongs to the cytochrome c oxidase subunit 3 family. In terms of assembly, component of the cytochrome c oxidase (complex IV, CIV), a multisubunit enzyme composed of 14 subunits. The complex is composed of a catalytic core of 3 subunits MT-CO1, MT-CO2 and MT-CO3, encoded in the mitochondrial DNA, and 11 supernumerary subunits COX4I, COX5A, COX5B, COX6A, COX6B, COX6C, COX7A, COX7B, COX7C, COX8 and NDUFA4, which are encoded in the nuclear genome. The complex exists as a monomer or a dimer and forms supercomplexes (SCs) in the inner mitochondrial membrane with NADH-ubiquinone oxidoreductase (complex I, CI) and ubiquinol-cytochrome c oxidoreductase (cytochrome b-c1 complex, complex III, CIII), resulting in different assemblies (supercomplex SCI(1)III(2)IV(1) and megacomplex MCI(2)III(2)IV(2)).

The protein localises to the mitochondrion inner membrane. It catalyses the reaction 4 Fe(II)-[cytochrome c] + O2 + 8 H(+)(in) = 4 Fe(III)-[cytochrome c] + 2 H2O + 4 H(+)(out). Component of the cytochrome c oxidase, the last enzyme in the mitochondrial electron transport chain which drives oxidative phosphorylation. The respiratory chain contains 3 multisubunit complexes succinate dehydrogenase (complex II, CII), ubiquinol-cytochrome c oxidoreductase (cytochrome b-c1 complex, complex III, CIII) and cytochrome c oxidase (complex IV, CIV), that cooperate to transfer electrons derived from NADH and succinate to molecular oxygen, creating an electrochemical gradient over the inner membrane that drives transmembrane transport and the ATP synthase. Cytochrome c oxidase is the component of the respiratory chain that catalyzes the reduction of oxygen to water. Electrons originating from reduced cytochrome c in the intermembrane space (IMS) are transferred via the dinuclear copper A center (CU(A)) of subunit 2 and heme A of subunit 1 to the active site in subunit 1, a binuclear center (BNC) formed by heme A3 and copper B (CU(B)). The BNC reduces molecular oxygen to 2 water molecules using 4 electrons from cytochrome c in the IMS and 4 protons from the mitochondrial matrix. This chain is Cytochrome c oxidase subunit 3 (MT-CO3), found in Ovis aries (Sheep).